A 243-amino-acid polypeptide reads, in one-letter code: 1-(5-phosphoribosyl)-5-[(5-phosphoribosylamino)methylideneamino] imidazole-4-carboxamide isomerase (243 aa).

Aspartate 10 (proton acceptor) is an active-site residue. Aspartate 129 (proton donor) is an active-site residue.

The protein belongs to the HisA/HisF family.

The protein localises to the cytoplasm. It catalyses the reaction 1-(5-phospho-beta-D-ribosyl)-5-[(5-phospho-beta-D-ribosylamino)methylideneamino]imidazole-4-carboxamide = 5-[(5-phospho-1-deoxy-D-ribulos-1-ylimino)methylamino]-1-(5-phospho-beta-D-ribosyl)imidazole-4-carboxamide. It functions in the pathway amino-acid biosynthesis; L-histidine biosynthesis; L-histidine from 5-phospho-alpha-D-ribose 1-diphosphate: step 4/9. This Nocardia farcinica (strain IFM 10152) protein is 1-(5-phosphoribosyl)-5-[(5-phosphoribosylamino)methylideneamino] imidazole-4-carboxamide isomerase.